The following is a 363-amino-acid chain: Protein-arginine kinase (363 aa).

Positions 24 to 255 (IVLSSRIRLA…EQLIAQERAA (232 aa)) constitute a Phosphagen kinase C-terminal domain. Residues 27–31 (SSRIR), His-92, Arg-126, 177–181 (RASVM), and 208–213 (RGTYGE) contribute to the ATP site. The short motif at 338–343 (RDVRRA) is the RDXXRA motif of the pArg binding pocket involved in allosteric regulation element.

The protein belongs to the ATP:guanido phosphotransferase family. In terms of assembly, homodimer. Dimerization is important for full catalytic activity.

The enzyme catalyses L-arginyl-[protein] + ATP = N(omega)-phospho-L-arginyl-[protein] + ADP + H(+). Its activity is regulated as follows. Appears to be allosterically activated by the binding of pArg-containing polypeptides to the pArg-binding pocket localized in the C-terminal domain of McsB. Functionally, catalyzes the specific phosphorylation of arginine residues in a large number of proteins. Is part of the bacterial stress response system, where it is involved in regulating the global heat shock repressor CtsR; phosphorylates arginine residues in the winged helix-turn-helix domain of CtsR, thereby preventing its binding to DNA and consequently inducing the expression of repressed genes. Protein arginine phosphorylation has a physiologically important role and is involved in the regulation of many critical cellular processes, such as protein homeostasis, motility, competence, and stringent and stress responses, by regulating gene expression and protein activity. Acts exclusively on Arg residues, since it cannot phosphorylate Tyr, Ser, Thr, His, Asp and Lys. Has no free arginine kinase activity. This is Protein-arginine kinase from Geobacillus stearothermophilus (Bacillus stearothermophilus).